The primary structure comprises 595 residues: NAD-dependent protein deacetylase hst4 (595 aa).

The interval 1–106 (MAPRKTKPAT…HLDLTPRLGF (106 aa)) is disordered. Over residues 9–32 (ATKPAAKPTPASTATTSSCPSPKS) the composition is skewed to low complexity. Positions 109–428 (YGDQEPQLNL…SADVERVKNE (320 aa)) constitute a Deacetylase sirtuin-type domain. NAD(+) contacts are provided by residues 134–153 (GAGI…DGLF) and 222–225 (QNID). The active-site Proton acceptor is the histidine 253. The Zn(2+) site is built by cysteine 261, cysteine 264, cysteine 283, and cysteine 286. NAD(+) contacts are provided by residues 342 to 344 (GTS), 373 to 375 (NNE), and cysteine 394. Residues 445 to 473 (QAQTGMLTPSSSYDGDVENASTTTLSNPA) show a composition bias toward polar residues. Residues 445–595 (QAQTGMLTPS…IPKGMGKLLD (151 aa)) form a disordered region. Composition is skewed to basic and acidic residues over residues 478–492 (KLTE…DAPK) and 530–543 (TPEE…EHKA).

Belongs to the sirtuin family. Class I subfamily. Zn(2+) is required as a cofactor.

It is found in the nucleus. It carries out the reaction N(6)-acetyl-L-lysyl-[protein] + NAD(+) + H2O = 2''-O-acetyl-ADP-D-ribose + nicotinamide + L-lysyl-[protein]. Functionally, NAD-dependent histone deacetylase, which could function in telomeric silencing, cell cycle progression and chromosome stability. The polypeptide is NAD-dependent protein deacetylase hst4 (Emericella nidulans (strain FGSC A4 / ATCC 38163 / CBS 112.46 / NRRL 194 / M139) (Aspergillus nidulans)).